A 69-amino-acid polypeptide reads, in one-letter code: Putative membrane protein insertion efficiency factor (69 aa).

It belongs to the UPF0161 family.

The protein resides in the cell membrane. Functionally, could be involved in insertion of integral membrane proteins into the membrane. In Alkaliphilus metalliredigens (strain QYMF), this protein is Putative membrane protein insertion efficiency factor.